The primary structure comprises 365 residues: Histidinol-phosphate aminotransferase (365 aa).

The interval 1–21 (MSRPVPNPGILDIAPYTPGKS) is disordered. At Lys-221 the chain carries N6-(pyridoxal phosphate)lysine.

Belongs to the class-II pyridoxal-phosphate-dependent aminotransferase family. Histidinol-phosphate aminotransferase subfamily. In terms of assembly, homodimer. The cofactor is pyridoxal 5'-phosphate.

The enzyme catalyses L-histidinol phosphate + 2-oxoglutarate = 3-(imidazol-4-yl)-2-oxopropyl phosphate + L-glutamate. It functions in the pathway amino-acid biosynthesis; L-histidine biosynthesis; L-histidine from 5-phospho-alpha-D-ribose 1-diphosphate: step 7/9. In Rhodopseudomonas palustris (strain ATCC BAA-98 / CGA009), this protein is Histidinol-phosphate aminotransferase.